The primary structure comprises 380 residues: Alanine racemase (380 aa).

Lysine 39 functions as the Proton acceptor; specific for D-alanine in the catalytic mechanism. At lysine 39 the chain carries N6-(pyridoxal phosphate)lysine. Arginine 137 is a substrate binding site. Tyrosine 263 serves as the catalytic Proton acceptor; specific for L-alanine. Residue methionine 310 participates in substrate binding.

The protein belongs to the alanine racemase family. Pyridoxal 5'-phosphate serves as cofactor.

It carries out the reaction L-alanine = D-alanine. It participates in amino-acid biosynthesis; D-alanine biosynthesis; D-alanine from L-alanine: step 1/1. Functionally, catalyzes the interconversion of L-alanine and D-alanine. May also act on other amino acids. In Macrococcus caseolyticus (strain JCSC5402) (Macrococcoides caseolyticum), this protein is Alanine racemase (alr).